The sequence spans 356 residues: Protein ATP1B4 (356 aa).

Residues 1–109 lie on the Nuclear side of the membrane; it reads MRRQLRSRRA…SLARTGQSRS (109 aa). Positions 32 to 77 are disordered; it reads LADEEEEAEEEAQVMMVPGLEEEEEEEEGKEEEEEREEEEGQGQST. Composition is skewed to acidic residues over residues 33-43 and 51-72; these read ADEEEEAEEEA and LEEEEEEEEGKEEEEEREEEEG. A helical; Signal-anchor for type II membrane protein membrane pass occupies residues 110-130; the sequence is LILVIYFFFYASLAAVITLFI. The Perinuclear space segment spans residues 131-356; sequence YMLFLAISPY…RIIFTLNIET (226 aa).

It belongs to the X(+)/potassium ATPases subunit beta family. In terms of assembly, does not associate with known Na,K-ATPase alpha-subunits. Associates with a SMAD7-transcriptional complex. Interacts with SNW1 and TOR1AIP1. Expressed in perinatal myocytes (at protein level). Expressed during postnatal development in skeletal muscle and heart.

The protein resides in the nucleus inner membrane. Its function is as follows. May act as a transcriptional coregulator during muscle development through its interaction with SNW1. Has lost its ancestral function as a Na,K-ATPase beta-subunit. The polypeptide is Protein ATP1B4 (Atp1b4) (Rattus norvegicus (Rat)).